A 390-amino-acid polypeptide reads, in one-letter code: Chorismate synthase 1 (390 aa).

Positions 39 and 45 each coordinate NADP(+). The disordered stretch occupies residues 95–117 (EQEEKEMKRKVTKPRPGHADLNG). FMN is bound by residues 132-134 (RSS), 253-254 (NA), glycine 298, 313-317 (KPIPT), and arginine 339.

The protein belongs to the chorismate synthase family. In terms of assembly, homotetramer. It depends on FMNH2 as a cofactor.

It carries out the reaction 5-O-(1-carboxyvinyl)-3-phosphoshikimate = chorismate + phosphate. The protein operates within metabolic intermediate biosynthesis; chorismate biosynthesis; chorismate from D-erythrose 4-phosphate and phosphoenolpyruvate: step 7/7. In terms of biological role, catalyzes the anti-1,4-elimination of the C-3 phosphate and the C-6 proR hydrogen from 5-enolpyruvylshikimate-3-phosphate (EPSP) to yield chorismate, which is the branch point compound that serves as the starting substrate for the three terminal pathways of aromatic amino acid biosynthesis. This reaction introduces a second double bond into the aromatic ring system. The chain is Chorismate synthase 1 from Bacillus thuringiensis (strain Al Hakam).